Reading from the N-terminus, the 59-residue chain is Large ribosomal subunit protein bL32 (59 aa).

This sequence belongs to the bacterial ribosomal protein bL32 family.

The polypeptide is Large ribosomal subunit protein bL32 (Mycoplasma capricolum subsp. capricolum (strain California kid / ATCC 27343 / NCTC 10154)).